The sequence spans 726 residues: Germacradienol/geosmin synthase (726 aa).

The germacradienol/germacrene D synthase stretch occupies residues 2–354; sequence TQQPFQLPHF…TSAADVGALL (353 aa). Residues aspartate 86, glutamate 91, asparagine 267, threonine 271, glutamine 276, aspartate 455, asparagine 598, serine 602, and glutamate 606 each contribute to the Mg(2+) site. Positions 86-91 match the DDXXD motif 1; degenerate motif; that stretch reads DDHFLE. The interval 355 to 726 is geosmin synthase; that stretch reads ADAVAQRARS…VPRSSPALTH (372 aa). The DDXXD motif 2; degenerate signature appears at 455–459; the sequence is DDYYP.

This sequence belongs to the terpene synthase family. The cofactor is Mg(2+).

It catalyses the reaction (2E,6E)-farnesyl diphosphate + H2O = (1E,4S,5E,7R)-germacra-1(10),5-dien-11-ol + diphosphate. The enzyme catalyses (1E,4S,5E,7R)-germacra-1(10),5-dien-11-ol + H2O = (-)-geosmin + acetone. It carries out the reaction (2E,6E)-farnesyl diphosphate = (-)-germacrene D + diphosphate. The protein operates within secondary metabolite biosynthesis; geosmin biosynthesis. It participates in sesquiterpene biosynthesis; germacradienol biosynthesis; germacradienol from farnesyl diphosphate: step 1/1. It functions in the pathway sesquiterpene biosynthesis; germacrene D biosynthesis; germacrene D from farnesyl diphosphate: step 1/1. Its function is as follows. Tow-domain protein where the N-terminal domain catalyzes the cyclization of farnesyl diphosphate (FPP) to a 85:15 mixture of the sesquiterpene alcohol germacradienol and the sesquiterpene hydrocarbon germacrene D. The C-terminal domain partially converts the germacradienol formed into geosmin, the characteristic odoriferous ('earthy aroma') constituent of Streptomyces species. The sequence is that of Germacradienol/geosmin synthase (cyc2) from Streptomyces coelicolor (strain ATCC BAA-471 / A3(2) / M145).